The primary structure comprises 234 residues: UPF0173 metal-dependent hydrolase Meso_1362 (234 aa).

This sequence belongs to the UPF0173 family.

In Chelativorans sp. (strain BNC1), this protein is UPF0173 metal-dependent hydrolase Meso_1362.